The sequence spans 271 residues: Zinc finger CCHC domain-containing protein 9 (271 aa).

The segment at 1–67 (MTRWARVTTS…RKKNKKKKEY (67 aa)) is disordered. The span at 7-20 (VTTSNSKRPLSATS) shows a compositional bias: polar residues. Over residues 22 to 33 (EDMKKGSVERAD) the composition is skewed to basic and acidic residues. Residues 35-46 (SLPNRKQCQSSR) show a composition bias toward polar residues. Basic residues predominate over residues 56–65 (AKRKKNKKKK). 4 CCHC-type zinc fingers span residues 128-145 (MVCF…DCPA), 155-172 (GICY…KCRA), 184-201 (AKCF…SCPD), and 211-228 (GSCK…DCRE).

In terms of tissue distribution, detected in brain cortex and in testis.

It is found in the nucleus. Its subcellular location is the nucleolus. May down-regulate transcription mediated by NF-kappa-B and the serum response element. This Mus musculus (Mouse) protein is Zinc finger CCHC domain-containing protein 9 (Zcchc9).